A 1092-amino-acid chain; its full sequence is Probable cellulose synthase A catalytic subunit 6 [UDP-forming] (1092 aa).

Topologically, residues 1-280 (MEASAGLVAG…SSSRINPYRM (280 aa)) are cytoplasmic. Residues Cys42, Cys45, Cys61, Cys64, Cys69, Cys72, Cys84, and Cys87 each contribute to the Zn(2+) site. The RING-type; degenerate zinc finger occupies 42-88 (CQICGDDVGEGPDGEPFVACNECAFPVCRNCYDYERREGSQACPQCK). Positions 100 to 123 (VAGDEEEDGVDDLEGEFGLDGRED) are disordered. The span at 103–116 (DEEEDGVDDLEGEF) shows a compositional bias: acidic residues. Residues 281–301 (IIIIRLVVLGFFFHYRVMHPV) form a helical membrane-spanning segment. The Extracellular segment spans residues 302–303 (ND). A helical transmembrane segment spans residues 304–324 (AFALWLISVICEIWFAMSWIL). Over 325–868 (DQFPKWLPIE…FLERFSYINS (544 aa)) the chain is Cytoplasmic. Positions 363, 369, 370, and 399 each coordinate UDP-alpha-D-glucose. The active site involves Asp399. A coiled-coil region spans residues 453-480 (VRERRAMKRDYEEFKVRINALVAKAQKV). Lys540 is a UDP-alpha-D-glucose binding site. 2 residues coordinate Mn(2+): Lys541 and Asp565. Residue Asp792 is part of the active site. A helical transmembrane segment spans residues 869–889 (IVYPWTSIPLLAYCTLPAICL). The Extracellular segment spans residues 890–901 (LTGKFITPELTN). Residues 902 to 922 (VASLWFMSLFICIFVTGILEM) form a helical membrane-spanning segment. At 923–937 (RWSGVAIDDWWRNEQ) the chain is on the cytoplasmic side. A helical membrane pass occupies residues 938–958 (FWVIGGVSSHLFAVFQGLLKV). Residues 959 to 987 (LAGVDTSFTVTSKAGDDEEFSELYTFKWT) lie on the Extracellular side of the membrane. Residues 988–1008 (TLLIPPTTLLLLNFIGVVAGV) form a helical membrane-spanning segment. The Cytoplasmic segment spans residues 1009 to 1019 (SNAINNGYESW). The chain crosses the membrane as a helical span at residues 1020-1040 (GPLFGKLFFAFWVIVHLYPFL). Residues 1041 to 1049 (KGLVGRQNR) are Extracellular-facing. The helical transmembrane segment at 1050–1070 (TPTIVIVWSILLASIFSLLWV) threads the bilayer. Topologically, residues 1071-1092 (RIDPFLAKNNGPLLEECGLDCN) are cytoplasmic.

Belongs to the glycosyltransferase 2 family. Plant cellulose synthase subfamily. Requires Mn(2+) as cofactor. The cofactor is Zn(2+).

The protein resides in the cell membrane. The enzyme catalyses [(1-&gt;4)-beta-D-glucosyl](n) + UDP-alpha-D-glucose = [(1-&gt;4)-beta-D-glucosyl](n+1) + UDP + H(+). The protein operates within glycan metabolism; plant cellulose biosynthesis. Probable catalytic subunit of cellulose synthase terminal complexes ('rosettes'), required for beta-1,4-glucan microfibril crystallization, a major mechanism of the cell wall formation. The protein is Probable cellulose synthase A catalytic subunit 6 [UDP-forming] (CESA6) of Oryza sativa subsp. japonica (Rice).